A 388-amino-acid chain; its full sequence is Na(+)/H(+) antiporter NhaA (388 aa).

Residues 1–11 lie on the Cytoplasmic side of the membrane; that stretch reads MKHLHRFFSSD. A helical membrane pass occupies residues 12-31; sequence ASGGIILIIAAVLAMIMANS. At 32–58 the chain is on the periplasmic side; that stretch reads GATSGWYHDFLETPVQLRVGTLEINKN. Residues 59-80 traverse the membrane as a helical segment; that stretch reads MLLWINDALMAVFFLLVGLEVK. Topologically, residues 81 to 96 are cytoplasmic; the sequence is RELMQGSLASLRQAAF. The helical transmembrane segment at 97 to 116 threads the bilayer; that stretch reads PVIAAIGGMIVPALLYLAFN. Residues 117-122 lie on the Periplasmic side of the membrane; the sequence is YADPIT. A helical membrane pass occupies residues 123-130; it reads REGWAIPA. Residues 131-154 lie on the Cytoplasmic side of the membrane; that stretch reads ATDIAFALGVLALLGSRVPLALKI. The helical transmembrane segment at 155–176 threads the bilayer; that stretch reads FLMALAIIDDLGAIIIIALFYT. Residues 177 to 180 are Periplasmic-facing; that stretch reads NDLS. The helical transmembrane segment at 181 to 200 threads the bilayer; that stretch reads MASLGVAAVAIAVLAVLNLC. At 201-204 the chain is on the cytoplasmic side; sequence GVRR. The chain crosses the membrane as a helical span at residues 205–222; sequence TGVYILVGVVLWTAVLKS. Gly-223 is a topological domain (periplasmic). Residues 224–236 traverse the membrane as a helical segment; it reads VHATLAGVIVGFF. The Cytoplasmic portion of the chain corresponds to 237–253; that stretch reads IPLKEKHGRSPAKRLEH. A helical transmembrane segment spans residues 254–272; that stretch reads VLHPWVAYLILPLFAFANA. Residues 273–286 are Periplasmic-facing; the sequence is GVSLQGVTLEGLTS. A helical membrane pass occupies residues 287–310; it reads ILPLGIIAGLLIGKPLGISLFCWL. Residues 311–339 are Cytoplasmic-facing; sequence ALRLKLAHLPEGTTYQQIMAVGILCGIGF. Residues 340-350 form a helical membrane-spanning segment; that stretch reads TMSIFIASLAF. At 351 to 357 the chain is on the periplasmic side; the sequence is GSVDPEL. The chain crosses the membrane as a helical span at residues 358 to 380; sequence INWAKLGILVGSISSAVIGYSWL. The Cytoplasmic segment spans residues 381-388; it reads RVRLRPSV.

This sequence belongs to the NhaA Na(+)/H(+) (TC 2.A.33) antiporter family.

The protein localises to the cell inner membrane. It carries out the reaction Na(+)(in) + 2 H(+)(out) = Na(+)(out) + 2 H(+)(in). Na(+)/H(+) antiporter that extrudes sodium in exchange for external protons. The protein is Na(+)/H(+) antiporter NhaA of Escherichia coli O6:K15:H31 (strain 536 / UPEC).